The following is an 88-amino-acid chain: Long neurotoxin 20 (88 aa).

The first 21 residues, 1-21 (MKTLLLTLVVVTIVCLDLGNS), serve as a signal peptide directing secretion. Intrachain disulfides connect Cys24–Cys42, Cys35–Cys63, Cys48–Cys52, Cys67–Cys78, and Cys79–Cys84.

This sequence belongs to the three-finger toxin family. Long-chain subfamily. Type II alpha-neurotoxin sub-subfamily. Expressed by the venom gland.

Its subcellular location is the secreted. In terms of biological role, binds with high affinity to muscular (alpha-1/CHRNA1) and neuronal (alpha-7/CHRNA7) nicotinic acetylcholine receptor (nAChR) and inhibits acetylcholine from binding to the receptor, thereby impairing neuromuscular and neuronal transmission. In Drysdalia coronoides (White-lipped snake), this protein is Long neurotoxin 20.